The sequence spans 168 residues: Ubiquitin-fold modifier-conjugating enzyme 1 (168 aa).

The active-site Glycyl thioester intermediate is cysteine 119.

It belongs to the ubiquitin-conjugating enzyme family. UFC1 subfamily.

Its function is as follows. E2-like enzyme which forms an intermediate with UFM1 via a thioester linkage. In Drosophila grimshawi (Hawaiian fruit fly), this protein is Ubiquitin-fold modifier-conjugating enzyme 1.